The sequence spans 255 residues: tRNA (guanine-N(1)-)-methyltransferase (255 aa).

S-adenosyl-L-methionine contacts are provided by residues G114 and 134 to 139; that span reads IGDYIL.

This sequence belongs to the RNA methyltransferase TrmD family. Homodimer.

The protein resides in the cytoplasm. The catalysed reaction is guanosine(37) in tRNA + S-adenosyl-L-methionine = N(1)-methylguanosine(37) in tRNA + S-adenosyl-L-homocysteine + H(+). Its function is as follows. Specifically methylates guanosine-37 in various tRNAs. This chain is tRNA (guanine-N(1)-)-methyltransferase, found in Blochmanniella pennsylvanica (strain BPEN).